The chain runs to 73 residues: Conotoxin reg3a (73 aa).

The first 20 residues, 1–20 (MMSKLRVLLTICLLLFPLSA), serve as a signal peptide directing secretion. Positions 21–55 (LPLDGDQPADQPAKRMWNGKLAARKPRFDKYDLVR) are excised as a propeptide. Residues P59, P60, P65, and P70 each carry the 4-hydroxyproline modification. C72 carries the cysteine amide modification.

Contains 3 disulfide bonds. As to expression, expressed by the venom duct.

The protein localises to the secreted. The chain is Conotoxin reg3a from Conus regius (Crown cone).